The primary structure comprises 818 residues: LisH domain-containing protein ARMC9 (818 aa).

The 33-residue stretch at 7–39 folds into the LisH domain; it reads HESELLGLVKEYLDFAEFEDTLKTFSKECKIKG. Residues 204-230 adopt a coiled-coil conformation; the sequence is QSNKEILQQLHQQLVEAERRSVTYLKR. Position 582 is a phosphoserine (Ser-582). 2 disordered regions span residues 642–755 and 790–818; these read VQWS…TTRE and SSCGPQQASRPGSTASSTRGLPSSQSHRK. The segment covering 701 to 711 has biased composition (low complexity); that stretch reads STPESCVSSSS. Residues 792-818 show a composition bias toward polar residues; it reads CGPQQASRPGSTASSTRGLPSSQSHRK.

As to quaternary structure, interacts with TOGARAM1, CCDC66, CEP104, CSPP1 and CEP290. Interacts with NDUFAF2. As to expression, strongly expressed in most melanomas and melanocytes. Weakly expressed in the testis.

It localises to the cytoplasm. It is found in the cytoskeleton. The protein resides in the cilium basal body. Its subcellular location is the cell projection. The protein localises to the cilium. It localises to the microtubule organizing center. It is found in the centrosome. The protein resides in the centriole. Its function is as follows. Involved in ciliogenesis. It is required for appropriate acetylation and polyglutamylation of ciliary microtubules, and regulation of cilium length. Acts as a positive regulator of hedgehog (Hh)signaling. May participate in the trafficking and/or retention of GLI2 and GLI3 proteins at the ciliary tip. This Homo sapiens (Human) protein is LisH domain-containing protein ARMC9.